A 398-amino-acid chain; its full sequence is Lysophosphatidylserine lipase ABHD12 (398 aa).

Over residues Met1 to Thr16 the composition is skewed to basic and acidic residues. Residues Met1–Gly24 form a disordered region. Residues Met1–Lys74 are Cytoplasmic-facing. A helical membrane pass occupies residues Ile75–Gly95. At Ile96–His398 the chain is on the extracellular side. A glycan (N-linked (GlcNAc...) asparagine) is linked at Asn123. Ser246 acts as the Nucleophile in catalysis. Residues Asp333 and His372 each act as charge relay system in the active site.

The protein belongs to the serine esterase family.

It localises to the endoplasmic reticulum membrane. It catalyses the reaction 1-(9Z-octadecenoyl)-sn-glycero-3-phospho-L-serine + H2O = sn-glycero-3-phospho-L-serine + (9Z)-octadecenoate + H(+). The catalysed reaction is 1-(9Z-octadecenoyl)-sn-glycero-3-phospho-(1'-sn-glycerol) + H2O = sn-glycero-3-phospho-(1'-sn-glycerol) + (9Z)-octadecenoate + H(+). It carries out the reaction 1-(9Z-octadecenoyl)-sn-glycero-3-phospho-(1D-myo-inositol) + H2O = sn-glycero-3-phospho-1D-myo-inositol + (9Z)-octadecenoate + H(+). The enzyme catalyses 1-(9Z-octadecenoyl)-sn-glycero-3-phosphoethanolamine + H2O = sn-glycero-3-phosphoethanolamine + (9Z)-octadecenoate + H(+). It catalyses the reaction 1-(9Z-octadecenoyl)-sn-glycero-3-phosphocholine + H2O = 1-(9Z-octadecenoyl)-sn-glycerol + phosphocholine + H(+). The catalysed reaction is 2-(9Z-octadecenoyl)-glycerol + H2O = glycerol + (9Z)-octadecenoate + H(+). It carries out the reaction 1-hexadecanoyl-sn-glycero-3-phospho-L-serine + H2O = sn-glycero-3-phospho-L-serine + hexadecanoate + H(+). The enzyme catalyses 2-(5Z,8Z,11Z,14Z-eicosatetraenoyl)-glycerol + H2O = glycerol + (5Z,8Z,11Z,14Z)-eicosatetraenoate + H(+). It catalyses the reaction Hydrolyzes glycerol monoesters of long-chain fatty acids.. The catalysed reaction is 1-decanoylglycerol + H2O = decanoate + glycerol + H(+). It carries out the reaction 1-dodecanoylglycerol + H2O = dodecanoate + glycerol + H(+). The enzyme catalyses 1-tetradecanoylglycerol + H2O = tetradecanoate + glycerol + H(+). It catalyses the reaction 2-hexadecanoylglycerol + H2O = glycerol + hexadecanoate + H(+). The catalysed reaction is 1-(9Z-octadecenoyl)-glycerol + H2O = glycerol + (9Z)-octadecenoate + H(+). It carries out the reaction 2-(9Z,12Z-octadecadienoyl)-glycerol + H2O = (9Z,12Z)-octadecadienoate + glycerol + H(+). The enzyme catalyses 1-(5Z,8Z,11Z,14Z-eicosatetraenoyl)-glycerol + H2O = glycerol + (5Z,8Z,11Z,14Z)-eicosatetraenoate + H(+). It catalyses the reaction 1-(9Z,12Z-octadecadienoyl)-glycerol + H2O = (9Z,12Z)-octadecadienoate + glycerol + H(+). The catalysed reaction is 1-hexadecanoylglycerol + H2O = glycerol + hexadecanoate + H(+). It carries out the reaction 1-octadecanoylglycerol + H2O = octadecanoate + glycerol + H(+). The enzyme catalyses 1-octadecanoyl-2-(9,10-epoxyoctadecanoyl)-sn-glycero-3-phospho-L-serine + H2O = 9,10-epoxyoctadecanoate + 1-octadecanoyl-sn-glycero-3-phosphoserine + H(+). It catalyses the reaction 1-octadecanoyl-2-(10-hydroxyoctadecanoyl)-sn-glycero-3-phospho-L-serine + H2O = 1-octadecanoyl-sn-glycero-3-phosphoserine + 10-hydroxyoctadecanoate + H(+). The catalysed reaction is 1-hexadecanoyl-2-(10-hydroxyoctadecanoyl)-sn-glycero-3-phospho-L-serine + H2O = 10-hydroxyoctadecanoate + 1-hexadecanoyl-sn-glycero-3-phospho-L-serine + H(+). Functionally, lysophosphatidylserine (LPS) lipase that mediates the hydrolysis of lysophosphatidylserine, a class of signaling lipids that regulates immunological and neurological processes. Represents a major lysophosphatidylserine lipase in the brain, thereby playing a key role in the central nervous system. Also able to hydrolyze oxidized phosphatidylserine; oxidized phosphatidylserine is produced in response to severe inflammatory stress and constitutes a proapoptotic 'eat me' signal. Also has monoacylglycerol (MAG) lipase activity: hydrolyzes 2-arachidonoylglycerol (2-AG), thereby acting as a regulator of endocannabinoid signaling pathways. Has a strong preference for very-long-chain lipid substrates; substrate specificity is likely due to improved catalysis and not improved substrate binding. The protein is Lysophosphatidylserine lipase ABHD12 of Bos taurus (Bovine).